Here is a 190-residue protein sequence, read N- to C-terminus: Protein LZIC (190 aa).

Residues 2–63 are a coiled coil; that stretch reads ASRGKTETSK…SEFNDSLKKI (62 aa).

The protein belongs to the CTNNBIP1 family. As to quaternary structure, does not interact with CTNNB1.

The chain is Protein LZIC (Lzic) from Rattus norvegicus (Rat).